Here is a 730-residue protein sequence, read N- to C-terminus: MPQTAGPDTIRILVSTDNHVGYEERDPIRKDDSWRTFDEIMQLARTKDVDMVLLGGDLFHDNKPSRKAMYQVMRSLRKNCLGMKPCELEFLSDPAEVFEGAFPHVNYYDPDINVSIPVFSIHGNHDDPSGDGHLCSLDLLQVAGLVNYFGRVPEADNIHVKPILLQKGKTKLALYGMSNVRDERIHRTFRDNKVRFYRPSQQTGDWFNLLTLHQNHYAHTPTGYLSENMLPDFLDLVIWGHEHECLIDPKKNPETGFHVMQPGSSIATSLVPGEAVPKHIAILSITGKSFEVEKIPLRTVRPFVIREITLATDKRFKGLEKKQDNRQEVTKRLMQIVEEMIAEANEMWRSLHEDSQDDEDEEQPLPLIRLKVEYSSPEGTKFEVENPQRFSNRFAGKVANQNDVVHFYRKKTGTTRKPKEGKRELPEGIAEALEDSDSISVDALVQEFFAQQSLKILPQAPFGDAVNQFVSKDDKHAVEMFVMDSLSSQVRGLLQLDDDKINEGLDSHIEDFRKVMEKNFLSGQQKQAQRRRRFKEKPEGWDSDLNGHWTLQPEAIEELSSSPEPAKEGGRVRPASRITVGDEDNLFEEEEFVQKTTAKRAPTTRATRKTAAATRATTATKASAPAKKSIAAPRGRKRANPFQDSAEEEEDVIMDDDDDYKPAPPVKAPPPKPARETQTRGAPKTRQTTLNFSQAERPTRTTQKAIEISDDEISEDDAFESMPARKSKRY.

Residues aspartate 17, histidine 19, aspartate 57, and asparagine 124 each contribute to the Mn(2+) site. The active-site Proton donor is the histidine 125. Mn(2+) is bound by residues histidine 213, histidine 241, and histidine 243. The segment at 521–730 (LSGQQKQAQR…SMPARKSKRY (210 aa)) is disordered. Acidic residues predominate over residues 581–591 (GDEDNLFEEEE). Residues 595 to 633 (KTTAKRAPTTRATRKTAAATRATTATKASAPAKKSIAAP) are compositionally biased toward low complexity. Residues 645–659 (SAEEEEDVIMDDDDD) show a composition bias toward acidic residues. A compositionally biased stretch (pro residues) spans 662–672 (PAPPVKAPPPK). A compositionally biased stretch (polar residues) spans 685 to 704 (TRQTTLNFSQAERPTRTTQK). A compositionally biased stretch (acidic residues) spans 708–719 (ISDDEISEDDAF).

Belongs to the MRE11/RAD32 family. As to quaternary structure, component of the MRN complex composed of two heterodimers RAD50 and MRE11 associated with a single NBS1. The cofactor is Mn(2+).

The protein resides in the nucleus. It localises to the chromosome. The protein localises to the telomere. Its function is as follows. Core component of the MRN complex, which plays a central role in double-strand break (DSB) repair, DNA recombination, maintenance of telomere integrity and meiosis. The MRN complex is involved in the repair of DNA double-strand breaks (DSBs) via homologous recombination (HR), an error-free mechanism which primarily occurs during S and G2 phases. The complex (1) mediates the end resection of damaged DNA, which generates proper single-stranded DNA, a key initial steps in HR, and is (2) required for the recruitment of other repair factors and efficient activation of ATM and ATR upon DNA damage. Within the MRN complex, MRE11 possesses both single-strand endonuclease activity and double-strand-specific 3'-5' exonuclease activity. MRE11 first endonucleolytically cleaves the 5' strand at DNA DSB ends to prevent non-homologous end joining (NHEJ) and licence HR. It then generates a single-stranded DNA gap via 3' to 5' exonucleolytic degradation, which is required for single-strand invasion and recombination. The sequence is that of Double-strand break repair protein MRE11 from Chaetomium thermophilum (strain DSM 1495 / CBS 144.50 / IMI 039719) (Thermochaetoides thermophila).